Consider the following 29-residue polypeptide: Glucagon (29 aa).

This sequence belongs to the glucagon family.

It localises to the secreted. In terms of biological role, glucagon plays a key role in glucose metabolism and homeostasis. Regulates blood glucose by increasing gluconeogenesis and decreasing glycolysis. This chain is Glucagon (gcg), found in Callorhinchus milii (Ghost shark).